Here is a 561-residue protein sequence, read N- to C-terminus: Arginine--tRNA ligase (561 aa).

A 'HIGH' region motif is present at residues 128–138 (ANPTGPLHVGH).

This sequence belongs to the class-I aminoacyl-tRNA synthetase family. As to quaternary structure, monomer.

The protein resides in the cytoplasm. It carries out the reaction tRNA(Arg) + L-arginine + ATP = L-arginyl-tRNA(Arg) + AMP + diphosphate. The polypeptide is Arginine--tRNA ligase (Marinobacter nauticus (strain ATCC 700491 / DSM 11845 / VT8) (Marinobacter aquaeolei)).